The following is a 100-amino-acid chain: Urease subunit gamma (100 aa).

The protein belongs to the urease gamma subunit family. Heterotrimer of UreA (gamma), UreB (beta) and UreC (alpha) subunits. Three heterotrimers associate to form the active enzyme.

Its subcellular location is the cytoplasm. It catalyses the reaction urea + 2 H2O + H(+) = hydrogencarbonate + 2 NH4(+). It participates in nitrogen metabolism; urea degradation; CO(2) and NH(3) from urea (urease route): step 1/1. The protein is Urease subunit gamma of Yersinia aldovae.